Here is a 317-residue protein sequence, read N- to C-terminus: Transcription factor EC (317 aa).

The tract at residues 1-90 (MTFDCRVCDQ…GLTDAPCPSI (90 aa)) is necessary for transcriptional transactivation. Positions 110–163 (QKKDNHNLIERRRRYNINYRIKELGTLIPKSNDPDMRWNKGTILKASVDYIKWL) constitute a bHLH domain. A necessary for transcriptional transactivation region spans residues 242–317 (TSPEFYEQAV…SLSSEDGDEL (76 aa)).

It belongs to the MiT/TFE family. In terms of assembly, homodimer. Forms heterodimers with MITF. Interacts with MITF. Forms heterodimers with TFE3. In terms of tissue distribution, expressed in osteoclast-like cells (at protein level). Expressed in cells of the mononuclear phagocyte lineage. Expressed in macrophages and in osteoclast-like cells.

It localises to the nucleus. Functionally, transcriptional regulator that acts as a repressor or an activator. Acts as a transcriptional transactivator on the proximal promoter region of the tartrate-resistant acid phosphatase (TRAP) E-box containing promoter. Collaborates with MITF in target gene activation. Acts as a transcriptional repressor on minimal promoter containing element F (that includes an E-box sequence). Binds to element F in an E-box sequence-specific manner. Acts as a transcriptional repressor on minimal promoter containing mu E3 enhancer sequence. Binds to mu E3 DNA sequence of the immunoglobulin heavy-chain gene enhancer. Binds DNA in a homo- or heterodimeric form. This Mus musculus (Mouse) protein is Transcription factor EC (Tfec).